Here is a 365-residue protein sequence, read N- to C-terminus: Nicotinate N-methyltransferase 1 (365 aa).

Residue D232 coordinates S-adenosyl-L-methionine.

It belongs to the class I-like SAM-binding methyltransferase superfamily. Cation-independent O-methyltransferase family.

It catalyses the reaction nicotinate + S-adenosyl-L-methionine = N-methylnicotinate + S-adenosyl-L-homocysteine. In terms of biological role, involved in nicotinate detoxification in planta. Catalyzes the conversion of nicotinate to N-methylnicotinate, which is a detoxified form of endogenous nicotinate in planta. This Oryza sativa subsp. japonica (Rice) protein is Nicotinate N-methyltransferase 1.